A 269-amino-acid chain; its full sequence is Ribonuclease HII (269 aa).

In terms of domain architecture, RNase H type-2 spans 79–269 (TYLAGADEVG…SFLKNILNTF (191 aa)). A divalent metal cation contacts are provided by Asp-85, Glu-86, and Asp-182.

This sequence belongs to the RNase HII family. Mn(2+) serves as cofactor. Mg(2+) is required as a cofactor.

It localises to the cytoplasm. The catalysed reaction is Endonucleolytic cleavage to 5'-phosphomonoester.. In terms of biological role, endonuclease that specifically degrades the RNA of RNA-DNA hybrids. The sequence is that of Ribonuclease HII from Clostridium novyi (strain NT).